Here is an 87-residue protein sequence, read N- to C-terminus: Large ribosomal subunit protein bL27 (87 aa).

A disordered region spans residues Met-1 to Tyr-26.

This sequence belongs to the bacterial ribosomal protein bL27 family.

This chain is Large ribosomal subunit protein bL27, found in Prochlorococcus marinus (strain SARG / CCMP1375 / SS120).